Reading from the N-terminus, the 502-residue chain is Premnaspirodiene oxygenase (502 aa).

The helical transmembrane segment at glutamine 2 to tryptophan 22 threads the bilayer. A heme-binding site is contributed by cysteine 440.

It belongs to the cytochrome P450 family. Heme serves as cofactor.

The protein localises to the membrane. It carries out the reaction (-)-vetispiradiene + 2 reduced [NADPH--hemoprotein reductase] + 2 O2 = solavetivone + 2 oxidized [NADPH--hemoprotein reductase] + 3 H2O + 2 H(+). In terms of biological role, involved in the biosynthesis of solavetivone, a potent antifungal phytoalexin. Catalyzes the successive and independent hydroxylations of premnaspirodiene and solavetivol. The first hydroxylation step is 3-fold more efficient than the second hydroxylation reaction. This chain is Premnaspirodiene oxygenase (CYP71D55), found in Hyoscyamus muticus (Egyptian henbane).